Reading from the N-terminus, the 801-residue chain is Leucine--tRNA ligase (801 aa).

The short motif at 39–50 (PYPSGAGIHVGH) is the 'HIGH' region element. The 'KMSKS' region signature appears at 578–582 (KMSKS). Lysine 581 contributes to the ATP binding site.

Belongs to the class-I aminoacyl-tRNA synthetase family.

The protein localises to the cytoplasm. It catalyses the reaction tRNA(Leu) + L-leucine + ATP = L-leucyl-tRNA(Leu) + AMP + diphosphate. In Mesoplasma florum (strain ATCC 33453 / NBRC 100688 / NCTC 11704 / L1) (Acholeplasma florum), this protein is Leucine--tRNA ligase.